We begin with the raw amino-acid sequence, 389 residues long: Putative RNA methyltransferase R405 (389 aa).

Residues Gln-207, Asp-261, and Asp-314 each contribute to the S-adenosyl-L-methionine site. Cys-342 acts as the Nucleophile in catalysis.

It belongs to the class I-like SAM-binding methyltransferase superfamily. RNA M5U methyltransferase family.

The polypeptide is Putative RNA methyltransferase R405 (Acanthamoeba polyphaga (Amoeba)).